The chain runs to 115 residues: NADH-ubiquinone oxidoreductase chain 3 (115 aa).

Transmembrane regions (helical) follow at residues Leu3–Trp23, Phe55–Leu75, and Thr86–Trp106.

This sequence belongs to the complex I subunit 3 family. In terms of assembly, core subunit of respiratory chain NADH dehydrogenase (Complex I) which is composed of 45 different subunits. Interacts with TMEM186. Interacts with TMEM242.

Its subcellular location is the mitochondrion inner membrane. It catalyses the reaction a ubiquinone + NADH + 5 H(+)(in) = a ubiquinol + NAD(+) + 4 H(+)(out). Functionally, core subunit of the mitochondrial membrane respiratory chain NADH dehydrogenase (Complex I) which catalyzes electron transfer from NADH through the respiratory chain, using ubiquinone as an electron acceptor. Essential for the catalytic activity of complex I. This Mus musculus (Mouse) protein is NADH-ubiquinone oxidoreductase chain 3.